Consider the following 230-residue polypeptide: NAD(P)H-hydrate epimerase (230 aa).

The YjeF N-terminal domain maps to 11–218 (AIAVDQELFN…ALQRKYELNL (208 aa)). (6S)-NADPHX is bound at residue 61 to 65 (NNGGD). Positions 62 and 126 each coordinate K(+). Residues 130–136 (GFSFKPP) and D159 each bind (6S)-NADPHX. K(+) is bound at residue S162.

Belongs to the NnrE/AIBP family. K(+) is required as a cofactor.

It carries out the reaction (6R)-NADHX = (6S)-NADHX. It catalyses the reaction (6R)-NADPHX = (6S)-NADPHX. Its function is as follows. Catalyzes the epimerization of the S- and R-forms of NAD(P)HX, a damaged form of NAD(P)H that is a result of enzymatic or heat-dependent hydration. This is a prerequisite for the S-specific NAD(P)H-hydrate dehydratase to allow the repair of both epimers of NAD(P)HX. This chain is NAD(P)H-hydrate epimerase, found in Drosophila melanogaster (Fruit fly).